A 1192-amino-acid polypeptide reads, in one-letter code: Chromosome partition protein Smc (1192 aa).

ATP is bound at residue 31–38 (PNGSGKSN). 4 coiled-coil regions span residues 164–197 (AGIS…VDEV), 234–292 (LTLS…RSEL), 333–369 (SAIA…RDVE), and 396–464 (EHEA…DAKV). An SMC hinge domain is found at 522 to 636 (KDLVGIVADC…LVDTLATAIG (115 aa)). 3 coiled-coil regions span residues 676 to 736 (RSEL…AKLH), 772 to 902 (ELAV…EREA), and 986 to 1030 (GSVN…INAD).

Belongs to the SMC family. In terms of assembly, homodimer.

The protein localises to the cytoplasm. Required for chromosome condensation and partitioning. This Rhodopirellula baltica (strain DSM 10527 / NCIMB 13988 / SH1) protein is Chromosome partition protein Smc.